Here is a 278-residue protein sequence, read N- to C-terminus: Putative cuticle collagen 91 (278 aa).

Disordered regions lie at residues 84-109 (LAKNCPPGPPGPPGAPGAAGEPGVDG) and 140-278 (GPAG…SVRQ). The segment covering 89–98 (PPGPPGPPGA) has biased composition (pro residues). 3 triple-helical region regions span residues 91 to 120 (GPPGPPGAPGAAGEPGVDGDAGAAGIDGVA), 137 to 199 (GEAG…NGQR), and 202 to 264 (GTPG…PGPD). A compositionally biased stretch (low complexity) spans 99–109 (PGAAGEPGVDG). Gly residues predominate over residues 158–167 (GADGQGGAPG). Low complexity-rich tracts occupy residues 172 to 228 (EGPA…AGAP) and 236 to 245 (APGVDGQPGA).

Belongs to the cuticular collagen family. As to quaternary structure, collagen polypeptide chains are complexed within the cuticle by disulfide bonds and other types of covalent cross-links.

Nematode cuticles are composed largely of collagen-like proteins. The cuticle functions both as an exoskeleton and as a barrier to protect the worm from its environment. The sequence is that of Putative cuticle collagen 91 (col-91) from Caenorhabditis elegans.